An 85-amino-acid chain; its full sequence is DAKALAGIADAKLKHTETGDKSAPVIENVEIKKGDRNELLSGIKEGKELKKAETNDRSAPVIPADAKVQEDNRGALLADIQATAK.

Residues 35 to 52 (DRNELLSGIKEGKELKKA) form the WH2 domain.

In terms of biological role, is able to bind two actin monomers at high concentrations of G-actin. The protein is Actobindin homolog of Entamoeba histolytica.